A 674-amino-acid chain; its full sequence is ATP-citrate synthase subunit 1 (674 aa).

Over residues 1 to 10 (MPSATSTNGA) the composition is skewed to low complexity. Residues 1–26 (MPSATSTNGANGNGNGNGASASPAPG) are disordered. ATP-binding positions include 261-281 (LLRY…EVGG) and 312-338 (FKTE…KNKS). Glu-278 contributes to the Mg(2+) binding site. His-320 (tele-phosphohistidine intermediate) is an active-site residue. 339–349 (MREAGFYVPDT) lines the CoA pocket.

It belongs to the succinate/malate CoA ligase alpha subunit family. Composed of two subunits.

Its subcellular location is the cytoplasm. It carries out the reaction oxaloacetate + acetyl-CoA + ADP + phosphate = citrate + ATP + CoA. In terms of biological role, catalyzes the formation of cytosolic acetyl-CoA, which is mainly used for the biosynthesis of fatty acids and sterols. The protein is ATP-citrate synthase subunit 1 (ACL1) of Sordaria macrospora (strain ATCC MYA-333 / DSM 997 / K(L3346) / K-hell).